The sequence spans 269 residues: 3-methyl-2-oxobutanoate hydroxymethyltransferase (269 aa).

Residues Asp-48 and Asp-87 each coordinate Mg(2+). 3-methyl-2-oxobutanoate-binding positions include 48 to 49 (DS), Asp-87, and Lys-116. Glu-118 contributes to the Mg(2+) binding site. The active-site Proton acceptor is the Glu-185.

It belongs to the PanB family. Homodecamer; pentamer of dimers. Mg(2+) serves as cofactor.

The protein localises to the cytoplasm. It catalyses the reaction 3-methyl-2-oxobutanoate + (6R)-5,10-methylene-5,6,7,8-tetrahydrofolate + H2O = 2-dehydropantoate + (6S)-5,6,7,8-tetrahydrofolate. The protein operates within cofactor biosynthesis; (R)-pantothenate biosynthesis; (R)-pantoate from 3-methyl-2-oxobutanoate: step 1/2. Functionally, catalyzes the reversible reaction in which hydroxymethyl group from 5,10-methylenetetrahydrofolate is transferred onto alpha-ketoisovalerate to form ketopantoate. The polypeptide is 3-methyl-2-oxobutanoate hydroxymethyltransferase (Campylobacter curvus (strain 525.92)).